Reading from the N-terminus, the 335-residue chain is Phospho-N-acetylmuramoyl-pentapeptide-transferase (335 aa).

10 helical membrane passes run 3-23 (LTIL…PHFI), 53-73 (GGTV…LVYF), 78-98 (SLGL…IGFL), 118-138 (FTFQ…PSGI), 143-163 (VFGY…FWVV), 174-194 (GIDG…GVIA), 200-220 (FDVL…FLFN), 226-246 (IFMG…ISIA), 251-271 (WTLL…MLQV), and 314-334 (VDAF…AILY).

It belongs to the glycosyltransferase 4 family. MraY subfamily. Requires Mg(2+) as cofactor.

It localises to the cell membrane. The enzyme catalyses UDP-N-acetyl-alpha-D-muramoyl-L-alanyl-gamma-D-glutamyl-L-lysyl-D-alanyl-D-alanine + di-trans,octa-cis-undecaprenyl phosphate = Mur2Ac(oyl-L-Ala-gamma-D-Glu-L-Lys-D-Ala-D-Ala)-di-trans,octa-cis-undecaprenyl diphosphate + UMP. Its pathway is cell wall biogenesis; peptidoglycan biosynthesis. Functionally, catalyzes the initial step of the lipid cycle reactions in the biosynthesis of the cell wall peptidoglycan: transfers peptidoglycan precursor phospho-MurNAc-pentapeptide from UDP-MurNAc-pentapeptide onto the lipid carrier undecaprenyl phosphate, yielding undecaprenyl-pyrophosphoryl-MurNAc-pentapeptide, known as lipid I. The polypeptide is Phospho-N-acetylmuramoyl-pentapeptide-transferase (Streptococcus equi subsp. equi (strain 4047)).